A 943-amino-acid polypeptide reads, in one-letter code: U3 small nucleolar RNA-associated protein 12 (943 aa).

WD repeat units lie at residues 77 to 107, 119 to 149, 161 to 190, 202 to 230, 389 to 418, 428 to 458, 471 to 501, 571 to 601, 613 to 643, and 655 to 685; these read AKPAECTYLEAHKDTDLLAVGYADGVIKVWD, GHKAAITLLQFDGTGTRLISGSKDSNIIVWD, SHKDSITGFWCQGEDWLISTSKDGMIKLWD, AHTGECWGLAVKDDLLITTGTDSQVKIWK, GQRTDVRSIDISDDNKLLATASNGSLKIWN, FECGYALTCKFLPGGLLVILGTRNGELQLFD, AHDAAIWSLDLTSDGKRLVTGSADKTVKFWD, GHKLPVLSIDISFDSKMIITSSADKNIKIWG, AHQDSIMNVKFLPQSHNFFSCSKDAVVKYWD, and AHQSEVWALAVATDGGFVVSSSHDHSIRIWE. The disordered stretch occupies residues 715 to 739; the sequence is EGNGDDAFKADASGEGVEDEASGVH.

Belongs to the WD repeat WDR3/UTP12 family. As to quaternary structure, interacts with snoRNA U3. Interacts with MPP10. Component of the ribosomal small subunit (SSU) processome composed of at least 40 protein subunits and snoRNA U3.

It is found in the nucleus. Its subcellular location is the nucleolus. Involved in nucleolar processing of pre-18S ribosomal RNA. This Saccharomyces cerevisiae (strain ATCC 204508 / S288c) (Baker's yeast) protein is U3 small nucleolar RNA-associated protein 12 (DIP2).